Here is a 224-residue protein sequence, read N- to C-terminus: Acyl-protein thioesterase 1 (224 aa).

Catalysis depends on charge relay system residues S116, D170, and H203.

This sequence belongs to the AB hydrolase superfamily. AB hydrolase 2 family.

The protein resides in the cytoplasm. It is found in the nucleus. It carries out the reaction S-hexadecanoyl-L-cysteinyl-[protein] + H2O = L-cysteinyl-[protein] + hexadecanoate + H(+). Its function is as follows. Hydrolyzes fatty acids from S-acylated cysteine residues in proteins with a strong preference for palmitoylated G-alpha proteins over other acyl substrates. Mediates the deacylation of G-alpha proteins such as GPA1 in vivo, but has weak or no activity toward palmitoylated Ras proteins. Has weak lysophospholipase activity in vitro; however such activity may not exist in vivo. In Schizosaccharomyces pombe (strain 972 / ATCC 24843) (Fission yeast), this protein is Acyl-protein thioesterase 1.